Consider the following 201-residue polypeptide: 3-isopropylmalate dehydratase small subunit (201 aa).

It belongs to the LeuD family. LeuD type 1 subfamily. As to quaternary structure, heterodimer of LeuC and LeuD.

The enzyme catalyses (2R,3S)-3-isopropylmalate = (2S)-2-isopropylmalate. It participates in amino-acid biosynthesis; L-leucine biosynthesis; L-leucine from 3-methyl-2-oxobutanoate: step 2/4. In terms of biological role, catalyzes the isomerization between 2-isopropylmalate and 3-isopropylmalate, via the formation of 2-isopropylmaleate. The polypeptide is 3-isopropylmalate dehydratase small subunit (Paramagnetospirillum magneticum (strain ATCC 700264 / AMB-1) (Magnetospirillum magneticum)).